A 206-amino-acid chain; its full sequence is dCTP deaminase, dUMP-forming (206 aa).

Residues 117 to 122 (RSSFGR), aspartate 135, 143 to 145 (TLE), glutamine 163, tyrosine 177, lysine 184, and glutamine 188 each bind dCTP. Catalysis depends on glutamate 145, which acts as the Proton donor/acceptor.

The protein belongs to the dCTP deaminase family. In terms of assembly, homotrimer.

The enzyme catalyses dCTP + 2 H2O = dUMP + NH4(+) + diphosphate. It functions in the pathway pyrimidine metabolism; dUMP biosynthesis; dUMP from dCTP: step 1/1. In terms of biological role, bifunctional enzyme that catalyzes both the deamination of dCTP to dUTP and the hydrolysis of dUTP to dUMP without releasing the toxic dUTP intermediate. This is dCTP deaminase, dUMP-forming from Methanococcus maripaludis (strain C6 / ATCC BAA-1332).